Here is a 338-residue protein sequence, read N- to C-terminus: Uroporphyrinogen decarboxylase (338 aa).

Substrate-binding positions include 27 to 31 (RQAGR), aspartate 77, tyrosine 151, serine 203, and histidine 317.

Belongs to the uroporphyrinogen decarboxylase family. In terms of assembly, homodimer.

The protein localises to the cytoplasm. The enzyme catalyses uroporphyrinogen III + 4 H(+) = coproporphyrinogen III + 4 CO2. Its pathway is porphyrin-containing compound metabolism; protoporphyrin-IX biosynthesis; coproporphyrinogen-III from 5-aminolevulinate: step 4/4. Functionally, catalyzes the decarboxylation of four acetate groups of uroporphyrinogen-III to yield coproporphyrinogen-III. This chain is Uroporphyrinogen decarboxylase, found in Wolbachia sp. subsp. Drosophila simulans (strain wRi).